The chain runs to 523 residues: Magnesium/proton exchanger 1 (523 aa).

The next 11 membrane-spanning stretches (helical) occupy residues 24–44 (LLPI…CFIG), 88–108 (IADV…LATI), 125–145 (GTLV…CVVM), 157–177 (LGVW…LYII), 185–205 (VITL…LLHA), 325–345 (VIGI…AFVP), 349–369 (IAHG…IAYG), 377–397 (ISCV…AAGT), 428–448 (VNIY…NYFV), 461–481 (LSFS…VLVL), and 495–515 (MWAW…VVLS).

Belongs to the Ca(2+):cation antiporter (CaCA) (TC 2.A.19) family. MHX subfamily.

It localises to the vacuole membrane. In terms of biological role, vacuolar transporter that exchanges protons with Mg(2+), Zn(2+) and Fe(2+) ions. May control the partitioning of Mg(2+) and Zn(2+) between plant organs. This is Magnesium/proton exchanger 1 (MHX1) from Oryza sativa subsp. japonica (Rice).